Here is a 398-residue protein sequence, read N- to C-terminus: 1-deoxy-D-xylulose 5-phosphate reductoisomerase (398 aa).

Residues T10, G11, S12, I13, G36, N38, and N124 each contribute to the NADPH site. A 1-deoxy-D-xylulose 5-phosphate-binding site is contributed by K125. An NADPH-binding site is contributed by E126. Residue D150 participates in Mn(2+) binding. 4 residues coordinate 1-deoxy-D-xylulose 5-phosphate: S151, E152, S186, and H209. E152 provides a ligand contact to Mn(2+). Residue G215 coordinates NADPH. Residues S222, N227, K228, and E231 each contribute to the 1-deoxy-D-xylulose 5-phosphate site. E231 provides a ligand contact to Mn(2+).

This sequence belongs to the DXR family. In terms of assembly, homodimer. Mg(2+) serves as cofactor. Requires Mn(2+) as cofactor.

It carries out the reaction 2-C-methyl-D-erythritol 4-phosphate + NADP(+) = 1-deoxy-D-xylulose 5-phosphate + NADPH + H(+). It functions in the pathway isoprenoid biosynthesis; isopentenyl diphosphate biosynthesis via DXP pathway; isopentenyl diphosphate from 1-deoxy-D-xylulose 5-phosphate: step 1/6. Catalyzes the NADPH-dependent rearrangement and reduction of 1-deoxy-D-xylulose-5-phosphate (DXP) to 2-C-methyl-D-erythritol 4-phosphate (MEP). This chain is 1-deoxy-D-xylulose 5-phosphate reductoisomerase, found in Pectobacterium atrosepticum (strain SCRI 1043 / ATCC BAA-672) (Erwinia carotovora subsp. atroseptica).